Reading from the N-terminus, the 303-residue chain is Uracil phosphoribosyltransferase (303 aa).

Residues 1–86 (MHIIMKTILA…RYVSSTPTDS (86 aa)) form a unknown region. The segment at 87 to 303 (LSSKPLAAVY…DRLCGTSNPS (217 aa)) is UPRTase. 5-phospho-alpha-D-ribose 1-diphosphate is bound by residues arginine 170, arginine 195, and 222-230 (DPMLATGGS). Residues isoleucine 285 and 290–292 (GDA) contribute to the uracil site. Aspartate 291 serves as a coordination point for 5-phospho-alpha-D-ribose 1-diphosphate.

This sequence belongs to the UPRTase family. Mg(2+) serves as cofactor.

The enzyme catalyses UMP + diphosphate = 5-phospho-alpha-D-ribose 1-diphosphate + uracil. The protein operates within pyrimidine metabolism; UMP biosynthesis via salvage pathway; UMP from uracil: step 1/1. With respect to regulation, allosterically activated by GTP. In terms of biological role, catalyzes the conversion of uracil and 5-phospho-alpha-D-ribose 1-diphosphate (PRPP) to UMP and diphosphate. The sequence is that of Uracil phosphoribosyltransferase (upp) from Chlamydia muridarum (strain MoPn / Nigg).